The following is a 512-amino-acid chain: Apolipoprotein N-acyltransferase (512 aa).

6 helical membrane-spanning segments follow: residues 5 to 25 (LDKY…FAAA), 56 to 76 (FAVS…FYWI), 92 to 112 (VPLT…CFWL), 118 to 138 (LPRG…TEFA), 168 to 188 (FGGI…LVLA), and 195 to 215 (SGKR…GYTA). The 245-residue stretch at 233-477 (LQGNIDQTLK…ETVLEGHIKG (245 aa)) folds into the CN hydrolase domain. Glu-271 (proton acceptor) is an active-site residue. Lys-337 is an active-site residue. The Nucleophile role is filled by Cys-389. The helical transmembrane segment at 487–507 (TGSSWWLMGILTLAALILFIF) threads the bilayer.

It belongs to the CN hydrolase family. Apolipoprotein N-acyltransferase subfamily.

It localises to the cell inner membrane. The catalysed reaction is N-terminal S-1,2-diacyl-sn-glyceryl-L-cysteinyl-[lipoprotein] + a glycerophospholipid = N-acyl-S-1,2-diacyl-sn-glyceryl-L-cysteinyl-[lipoprotein] + a 2-acyl-sn-glycero-3-phospholipid + H(+). The protein operates within protein modification; lipoprotein biosynthesis (N-acyl transfer). Catalyzes the phospholipid dependent N-acylation of the N-terminal cysteine of apolipoprotein, the last step in lipoprotein maturation. The protein is Apolipoprotein N-acyltransferase of Neisseria meningitidis serogroup A / serotype 4A (strain DSM 15465 / Z2491).